A 602-amino-acid polypeptide reads, in one-letter code: Beta-(1--&gt;2)glucan export ATP-binding/permease protein NdvA (602 aa).

Positions 21-311 (GWTLAVANLL…VVSFVNSLMM (291 aa)) constitute an ABC transmembrane type-1 domain. 6 consecutive transmembrane segments (helical) span residues 22 to 42 (WTLAVANLLLATAQFAEPVLF), 68 to 88 (LLAAWVGFGLFTILCSATVAL), 146 to 166 (EHFAAILSLVVLLPLSLYINW), 167 to 187 (RLAILLFALCGVFTVLTTLVV), 254 to 274 (VITRASTTITVLAIFSLGIAL), and 276 to 296 (QQGLTSVGEIVMFVSFATLLI). Residues 345–579 (VEFLDVSFSY…RGRFAELARA (235 aa)) enclose the ABC transporter domain. 378-385 (GATGAGKS) lines the ATP pocket.

Belongs to the ABC transporter superfamily. Beta-(1--&gt;2)glucan exporter (TC 3.A.1.108.1) family. As to quaternary structure, homodimer.

Its subcellular location is the cell inner membrane. The catalysed reaction is [(1-&gt;2)-beta-D-glucosyl](n)(in) + ATP + H2O = [(1-&gt;2)-beta-D-glucosyl](n)(out) + ADP + phosphate + H(+). In terms of biological role, involved in beta-(1--&gt;2)glucan export. Transmembrane domains (TMD) form a pore in the inner membrane and the ATP-binding domain (NBD) is responsible for energy generation. The polypeptide is Beta-(1--&gt;2)glucan export ATP-binding/permease protein NdvA (Rhodopseudomonas palustris (strain BisB5)).